Here is a 315-residue protein sequence, read N- to C-terminus: Methionyl-tRNA formyltransferase (315 aa).

Position 113-116 (113-116 (SLLP)) interacts with (6S)-5,6,7,8-tetrahydrofolate.

It belongs to the Fmt family.

The enzyme catalyses L-methionyl-tRNA(fMet) + (6R)-10-formyltetrahydrofolate = N-formyl-L-methionyl-tRNA(fMet) + (6S)-5,6,7,8-tetrahydrofolate + H(+). Attaches a formyl group to the free amino group of methionyl-tRNA(fMet). The formyl group appears to play a dual role in the initiator identity of N-formylmethionyl-tRNA by promoting its recognition by IF2 and preventing the misappropriation of this tRNA by the elongation apparatus. This chain is Methionyl-tRNA formyltransferase, found in Salmonella dublin (strain CT_02021853).